The primary structure comprises 634 residues: tRNA uridine 5-carboxymethylaminomethyl modification enzyme MnmG (634 aa).

14–19 (GGGHAG) provides a ligand contact to FAD. 279-293 (GPRYCPSIEDKVVRF) is a binding site for NAD(+).

It belongs to the MnmG family. As to quaternary structure, homodimer. Heterotetramer of two MnmE and two MnmG subunits. The cofactor is FAD.

The protein localises to the cytoplasm. Its function is as follows. NAD-binding protein involved in the addition of a carboxymethylaminomethyl (cmnm) group at the wobble position (U34) of certain tRNAs, forming tRNA-cmnm(5)s(2)U34. This is tRNA uridine 5-carboxymethylaminomethyl modification enzyme MnmG from Xanthomonas campestris pv. campestris (strain B100).